The sequence spans 474 residues: Ribosomal protein uS12 methylthiotransferase RimO (474 aa).

Residues 37-147 (NRIGFVSLGC…VLNHVHKYVP (111 aa)) form the MTTase N-terminal domain. [4Fe-4S] cluster contacts are provided by cysteine 46, cysteine 82, cysteine 111, cysteine 179, cysteine 183, and cysteine 186. Positions 165–402 (LTPKHYAYLK…MEVQAEISAE (238 aa)) constitute a Radical SAM core domain. The 67-residue stretch at 405–471 (ARLVGRELDI…EHDLWAELVA (67 aa)) folds into the TRAM domain.

This sequence belongs to the methylthiotransferase family. RimO subfamily. [4Fe-4S] cluster serves as cofactor.

Its subcellular location is the cytoplasm. The enzyme catalyses L-aspartate(89)-[ribosomal protein uS12]-hydrogen + (sulfur carrier)-SH + AH2 + 2 S-adenosyl-L-methionine = 3-methylsulfanyl-L-aspartate(89)-[ribosomal protein uS12]-hydrogen + (sulfur carrier)-H + 5'-deoxyadenosine + L-methionine + A + S-adenosyl-L-homocysteine + 2 H(+). In terms of biological role, catalyzes the methylthiolation of an aspartic acid residue of ribosomal protein uS12. The protein is Ribosomal protein uS12 methylthiotransferase RimO of Shewanella amazonensis (strain ATCC BAA-1098 / SB2B).